A 354-amino-acid polypeptide reads, in one-letter code: Peripherin-2 (354 aa).

Residues 1–24 are Cytoplasmic-facing; the sequence is MALLKVKFNQKKRVKLAQGLWLMN. A helical transmembrane segment spans residues 25–43; it reads WFSVFAGIIVFSMGLFLKI. Residues 44-61 lie on the Lumenal side of the membrane; the sequence is ELRKRSEVMDNSESHFVP. The chain crosses the membrane as a helical span at residues 62–80; the sequence is NSLILMGILSCAFNGFAGK. The Cytoplasmic portion of the chain corresponds to 81-99; sequence ICYDSLDPAKFAKWKPLLK. The chain crosses the membrane as a helical span at residues 100–123; it reads PYLALCFFFNILLFFVALICFLMR. At 124–264 the chain is on the lumenal side; it reads GSLESTLAQG…LHYYSSMMSS (141 aa). An N-linked (GlcNAc...) asparagine glycan is attached at asparagine 229. The chain crosses the membrane as a helical span at residues 265–290; sequence MGAVVLLVWLFEMSVMVGLRLLHTSL. Over 291–354 the chain is Cytoplasmic; sequence ESIANPEDPE…GKTPAITTVS (64 aa). A disordered region spans residues 335–354; it reads GAEGAEGEEAGKTPAITTVS.

It belongs to the PRPH2/ROM1 family. Homodimer; disulfide-linked.

It is found in the membrane. May be involved in the morphogenesis of retina outer segment disks and the development and maintenance of the retina ultrastructure. The chain is Peripherin-2 (PRPH2) from Gallus gallus (Chicken).